The primary structure comprises 162 residues: Endoribonuclease YbeY (162 aa).

Positions 117, 121, and 127 each coordinate Zn(2+).

Belongs to the endoribonuclease YbeY family. The cofactor is Zn(2+).

The protein localises to the cytoplasm. Its function is as follows. Single strand-specific metallo-endoribonuclease involved in late-stage 70S ribosome quality control and in maturation of the 3' terminus of the 16S rRNA. This is Endoribonuclease YbeY from Francisella tularensis subsp. mediasiatica (strain FSC147).